The chain runs to 106 residues: Thiosulfate sulfurtransferase GlpE (106 aa).

One can recognise a Rhodanese domain in the interval 16-104 (REQGAVLVDV…WRATYPDETV (89 aa)). The Cysteine persulfide intermediate role is filled by C64.

The protein belongs to the GlpE family.

The protein resides in the cytoplasm. It carries out the reaction thiosulfate + hydrogen cyanide = thiocyanate + sulfite + 2 H(+). The enzyme catalyses thiosulfate + [thioredoxin]-dithiol = [thioredoxin]-disulfide + hydrogen sulfide + sulfite + 2 H(+). Its function is as follows. Transferase that catalyzes the transfer of sulfur from thiosulfate to thiophilic acceptors such as cyanide or dithiols. May function in a CysM-independent thiosulfate assimilation pathway by catalyzing the conversion of thiosulfate to sulfite, which can then be used for L-cysteine biosynthesis. The polypeptide is Thiosulfate sulfurtransferase GlpE (Pseudomonas savastanoi pv. phaseolicola (strain 1448A / Race 6) (Pseudomonas syringae pv. phaseolicola (strain 1448A / Race 6))).